We begin with the raw amino-acid sequence, 569 residues long: 63 kDa chaperonin, mitochondrial (569 aa).

Residues 1–29 (MFKMYRSPHITRNSFKYLKATNINSCRFY) constitute a mitochondrion transit peptide.

The protein belongs to the chaperonin (HSP60) family. In terms of assembly, forms a single seven-member ring complex, in tight association with the p60 protein. In terms of tissue distribution, testis.

It localises to the mitochondrion. Its function is as follows. Implicated in mitochondrial protein import and macromolecular assembly. May facilitate the correct folding of imported proteins. May also prevent misfolding and promote the refolding and proper assembly of unfolded polypeptides generated under stress conditions in the mitochondrial matrix. The protein is 63 kDa chaperonin, mitochondrial of Heliothis virescens (Tobacco budworm moth).